Consider the following 130-residue polypeptide: Small ribosomal subunit protein uS11 (130 aa).

Belongs to the universal ribosomal protein uS11 family. In terms of assembly, part of the 30S ribosomal subunit. Interacts with proteins S7 and S18. Binds to IF-3.

Its function is as follows. Located on the platform of the 30S subunit, it bridges several disparate RNA helices of the 16S rRNA. Forms part of the Shine-Dalgarno cleft in the 70S ribosome. The polypeptide is Small ribosomal subunit protein uS11 (Teredinibacter turnerae (strain ATCC 39867 / T7901)).